The following is a 176-amino-acid chain: MGYPKEGETIQIHSYKHNGLIHRIWNETTILKSTEMCVIGANDRTMVTESDGRTWITREPAICYFHARQWFNVIGMLREDGVHYYCNISSPFAYDGEAIKYIDYDLDVKVFPDMTYNILDEDEYDDHRKAMNYPKEIDSILRDYLNTLLHWIHQRQGPFAPEFVDMWYERYLRYTK.

The Proton donor role is filled by Arg-23. The Mg(2+) site is built by Asn-87, Asp-103, Asp-105, Asp-107, Asp-120, and Glu-123.

This sequence belongs to the Ntdp family. Requires Mg(2+) as cofactor.

It carries out the reaction a ribonucleoside 5'-triphosphate + H2O = a ribonucleoside 5'-diphosphate + phosphate + H(+). The enzyme catalyses a ribonucleoside 5'-diphosphate + H2O = a ribonucleoside 5'-phosphate + phosphate + H(+). In terms of biological role, has nucleoside phosphatase activity towards nucleoside triphosphates and nucleoside diphosphates. This chain is Nucleoside triphosphate/diphosphate phosphatase (ygaC), found in Bacillus subtilis (strain 168).